Consider the following 290-residue polypeptide: Large ribosomal subunit protein uL2m (290 aa).

It belongs to the universal ribosomal protein uL2 family. Probably part of the large ribosomal subunit.

The protein resides in the hydrogenosome. This chain is Large ribosomal subunit protein uL2m (rpl2), found in Nyctotherus ovalis.